The following is a 507-amino-acid chain: Maturase K (507 aa).

The protein belongs to the intron maturase 2 family. MatK subfamily.

It localises to the plastid. It is found in the chloroplast. Functionally, usually encoded in the trnK tRNA gene intron. Probably assists in splicing its own and other chloroplast group II introns. The polypeptide is Maturase K (Lens culinaris (Lentil)).